Consider the following 127-residue polypeptide: MAKASIQFFRGVDEPVVPDIRLTRSRDGLTGQATFRFEQPAAIAPETMGDITGMWMVDEEGEMVTREINGKFVNGTASALEAVYSWKSVQDFERFMRFAQRYAEANGLGYSQNQNSDQTDGDANAEA.

A disordered region spans residues 107-127 (GLGYSQNQNSDQTDGDANAEA). Over residues 109-118 (GYSQNQNSDQ) the composition is skewed to polar residues.

Belongs to the Psb28 family. In terms of assembly, part of the photosystem II complex.

The protein resides in the cellular thylakoid membrane. This Parasynechococcus marenigrum (strain WH8102) protein is Photosystem II reaction center Psb28 protein.